Reading from the N-terminus, the 184-residue chain is Secreted protein B (184 aa).

Positions 1–19 (MRFILVLVLILGLVSSSFG) are cleaved as a signal peptide. Residue Asn129 is glycosylated (N-linked (GlcNAc...) asparagine). Positions 164–166 (RGD) match the Cell attachment site motif.

This sequence belongs to the Sct family.

Its subcellular location is the secreted. This Dictyostelium discoideum (Social amoeba) protein is Secreted protein B (29C).